The primary structure comprises 234 residues: 2-C-methyl-D-erythritol 4-phosphate cytidylyltransferase (234 aa).

This sequence belongs to the IspD/TarI cytidylyltransferase family. IspD subfamily.

The catalysed reaction is 2-C-methyl-D-erythritol 4-phosphate + CTP + H(+) = 4-CDP-2-C-methyl-D-erythritol + diphosphate. Its pathway is isoprenoid biosynthesis; isopentenyl diphosphate biosynthesis via DXP pathway; isopentenyl diphosphate from 1-deoxy-D-xylulose 5-phosphate: step 2/6. In terms of biological role, catalyzes the formation of 4-diphosphocytidyl-2-C-methyl-D-erythritol from CTP and 2-C-methyl-D-erythritol 4-phosphate (MEP). The sequence is that of 2-C-methyl-D-erythritol 4-phosphate cytidylyltransferase from Pseudomonas aeruginosa (strain UCBPP-PA14).